Consider the following 181-residue polypeptide: MAVDANNLIWVDLEMTGLEPDVDRVIEIATLVTDQELNIIAQGPVLAIYQTDEVLAGMDDWNQKHHGESGLVDRVRASKCSEQDAIAQTIDFLAQYVPKGASPMCGNSIGQDRRFLNKYMLELEEFFHYRNIDVSTVKELVRRWSPETMNGFSKKNTHQALEDIKESIAEMQFYRKEVFKI.

An Exonuclease domain is found at 8-171 (LIWVDLEMTG…EDIKESIAEM (164 aa)). Residue Tyr-129 is part of the active site.

It belongs to the oligoribonuclease family.

The protein localises to the cytoplasm. In terms of biological role, 3'-to-5' exoribonuclease specific for small oligoribonucleotides. The protein is Oligoribonuclease of Shewanella frigidimarina (strain NCIMB 400).